A 235-amino-acid chain; its full sequence is ATP-dependent Clp protease proteolytic subunit (235 aa).

The active-site Nucleophile is the Ser-123. Residue His-148 is part of the active site.

This sequence belongs to the peptidase S14 family. As to quaternary structure, fourteen ClpP subunits assemble into 2 heptameric rings which stack back to back to give a disk-like structure with a central cavity, resembling the structure of eukaryotic proteasomes.

It localises to the cytoplasm. It carries out the reaction Hydrolysis of proteins to small peptides in the presence of ATP and magnesium. alpha-casein is the usual test substrate. In the absence of ATP, only oligopeptides shorter than five residues are hydrolyzed (such as succinyl-Leu-Tyr-|-NHMec, and Leu-Tyr-Leu-|-Tyr-Trp, in which cleavage of the -Tyr-|-Leu- and -Tyr-|-Trp bonds also occurs).. In terms of biological role, cleaves peptides in various proteins in a process that requires ATP hydrolysis. Has a chymotrypsin-like activity. Plays a major role in the degradation of misfolded proteins. This is ATP-dependent Clp protease proteolytic subunit from Novosphingobium aromaticivorans (strain ATCC 700278 / DSM 12444 / CCUG 56034 / CIP 105152 / NBRC 16084 / F199).